Here is a 152-residue protein sequence, read N- to C-terminus: UPF0225 protein YchJ (152 aa).

The protein belongs to the UPF0225 family.

This chain is UPF0225 protein YchJ, found in Salmonella gallinarum (strain 287/91 / NCTC 13346).